The sequence spans 319 residues: Acetyl-coenzyme A carboxylase carboxyl transferase subunit alpha (319 aa).

Residues 39–293 form the CoA carboxyltransferase C-terminal domain; it reads RLQKKSNDLT…KAVLEKQLHE (255 aa).

It belongs to the AccA family. In terms of assembly, acetyl-CoA carboxylase is a heterohexamer composed of biotin carboxyl carrier protein (AccB), biotin carboxylase (AccC) and two subunits each of ACCase subunit alpha (AccA) and ACCase subunit beta (AccD).

Its subcellular location is the cytoplasm. It catalyses the reaction N(6)-carboxybiotinyl-L-lysyl-[protein] + acetyl-CoA = N(6)-biotinyl-L-lysyl-[protein] + malonyl-CoA. Its pathway is lipid metabolism; malonyl-CoA biosynthesis; malonyl-CoA from acetyl-CoA: step 1/1. Its function is as follows. Component of the acetyl coenzyme A carboxylase (ACC) complex. First, biotin carboxylase catalyzes the carboxylation of biotin on its carrier protein (BCCP) and then the CO(2) group is transferred by the carboxyltransferase to acetyl-CoA to form malonyl-CoA. The polypeptide is Acetyl-coenzyme A carboxylase carboxyl transferase subunit alpha (Neisseria gonorrhoeae (strain ATCC 700825 / FA 1090)).